A 263-amino-acid polypeptide reads, in one-letter code: Indole-3-glycerol phosphate synthase (263 aa).

This sequence belongs to the TrpC family.

The catalysed reaction is 1-(2-carboxyphenylamino)-1-deoxy-D-ribulose 5-phosphate + H(+) = (1S,2R)-1-C-(indol-3-yl)glycerol 3-phosphate + CO2 + H2O. It functions in the pathway amino-acid biosynthesis; L-tryptophan biosynthesis; L-tryptophan from chorismate: step 4/5. The protein is Indole-3-glycerol phosphate synthase of Acidithiobacillus ferrooxidans (strain ATCC 23270 / DSM 14882 / CIP 104768 / NCIMB 8455) (Ferrobacillus ferrooxidans (strain ATCC 23270)).